The following is a 987-amino-acid chain: Ephrin type-B receptor 4 (987 aa).

Residues 1 to 15 (MELRVLLCWASLAAA) form the signal peptide. Residues 16 to 539 (LEETLLNTKL…ESEGWREQLA (524 aa)) lie on the Extracellular side of the membrane. One can recognise an Eph LBD domain in the interval 17 to 202 (EETLLNTKLE…FYKKCAQLTV (186 aa)). Intrachain disulfides connect cysteine 61-cysteine 184 and cysteine 97-cysteine 107. Residues asparagine 203, asparagine 335, and asparagine 426 are each glycosylated (N-linked (GlcNAc...) asparagine). 2 Fibronectin type-III domains span residues 323–432 (PPSA…TDRE) and 436–529 (AVSD…TQLD). A helical transmembrane segment spans residues 540-560 (LIAGTAVVGVVLVLVVIVVAV). The Cytoplasmic portion of the chain corresponds to 561 to 987 (LCLRKQSNGR…GGTGGPAPQY (427 aa)). The 285-residue stretch at 615 to 899 (VKIEEVIGAG…ENGGASHPLL (285 aa)) folds into the Protein kinase domain. ATP-binding positions include 621–629 (IGAGEFGEV) and lysine 647. The active-site Proton acceptor is the aspartate 740. Phosphoserine is present on residues serine 769, serine 770, serine 911, and serine 943. The region spanning 907–971 (SAFGSVGEWL…LASVQHMKSQ (65 aa)) is the SAM domain. Positions 965 to 987 (VQHMKSQAKPGTPGGTGGPAPQY) are disordered. Threonine 976 is subject to Phosphothreonine. Residues 976-987 (TPGGTGGPAPQY) show a composition bias toward gly residues. The PDZ-binding signature appears at 985-987 (PQY). Tyrosine 987 is modified (phosphotyrosine).

Belongs to the protein kinase superfamily. Tyr protein kinase family. Ephrin receptor subfamily. As to quaternary structure, heterotetramer upon binding of the ligand. The heterotetramer is composed of an ephrin dimer and a receptor dimer. Oligomerization is probably required to induce biological responses. Interacts with RASA1; the interaction depends on EPHB4 tyrosine-phosphorylation. In terms of processing, phosphorylated; autophosphorylation is stimulated by EFNB2. Abundantly expressed in placenta but also detected in kidney, liver, lung, pancreas, skeletal muscle and heart. Expressed in primitive and myeloid, but not lymphoid, hematopoietic cells. Also observed in cell lines derived from liver, breast, colon, lung, melanocyte and cervix.

It is found in the cell membrane. The catalysed reaction is L-tyrosyl-[protein] + ATP = O-phospho-L-tyrosyl-[protein] + ADP + H(+). Receptor tyrosine kinase which binds promiscuously transmembrane ephrin-B family ligands residing on adjacent cells, leading to contact-dependent bidirectional signaling into neighboring cells. The signaling pathway downstream of the receptor is referred to as forward signaling while the signaling pathway downstream of the ephrin ligand is referred to as reverse signaling. Together with its cognate ligand/functional ligand EFNB2 it is involved in the regulation of cell adhesion and migration, and plays a central role in heart morphogenesis, angiogenesis and blood vessel remodeling and permeability. EPHB4-mediated forward signaling controls cellular repulsion and segregation from EFNB2-expressing cells. The sequence is that of Ephrin type-B receptor 4 (EPHB4) from Homo sapiens (Human).